Consider the following 417-residue polypeptide: Proteasome-activating nucleotidase (417 aa).

Residues 24–78 (SKYLLDRVKQLEERNVRLKEEYRKIELEKKSVENKKVQYEREIRKLTSELDRLKT) adopt a coiled-coil conformation. ATP is bound by residues 203-208 (GTGKTL) and His-342. A docks into pockets in the proteasome alpha-ring to cause gate opening region spans residues 415–417 (MFA).

It belongs to the AAA ATPase family. In terms of assembly, homohexamer. The hexameric complex has a two-ring architecture resembling a top hat that caps the 20S proteasome core at one or both ends. Upon ATP-binding, the C-terminus of PAN interacts with the alpha-rings of the proteasome core by binding to the intersubunit pockets.

It is found in the cytoplasm. Functionally, ATPase which is responsible for recognizing, binding, unfolding and translocation of substrate proteins into the archaeal 20S proteasome core particle. Is essential for opening the gate of the 20S proteasome via an interaction with its C-terminus, thereby allowing substrate entry and access to the site of proteolysis. Thus, the C-termini of the proteasomal ATPase function like a 'key in a lock' to induce gate opening and therefore regulate proteolysis. Unfolding activity requires energy from ATP hydrolysis, whereas ATP binding alone promotes ATPase-20S proteasome association which triggers gate opening, and supports translocation of unfolded substrates. This is Proteasome-activating nucleotidase from Methanocella arvoryzae (strain DSM 22066 / NBRC 105507 / MRE50).